A 269-amino-acid chain; its full sequence is uncharacterized protein (269 aa).

Residues 1 to 16 (MTDVPSKPPQTTPPPK) are compositionally biased toward pro residues. Disordered stretches follow at residues 1 to 110 (MTDV…TISG) and 157 to 269 (ILQQ…PTIQ). The span at 21 to 45 (APTTIFSSPPQLPDRSSLNISHTAS) shows a compositional bias: polar residues. The segment covering 46–58 (TPTLTPTPLQQQQ) has biased composition (low complexity). Polar residues predominate over residues 80–93 (SFSNSPNRQTQSFI). The segment covering 159 to 181 (QQPQQSHSPQQQQQQHTPNHQQP) has biased composition (low complexity). The segment covering 182–195 (LSPQQQKDLAQKRS) has biased composition (polar residues). Positions 198-213 (PLPPRPNKNRPLPTPI) are enriched in pro residues.

This is an uncharacterized protein from Dictyostelium discoideum (Social amoeba).